A 122-amino-acid polypeptide reads, in one-letter code: Large ribosomal subunit protein uL14 (122 aa).

The protein belongs to the universal ribosomal protein uL14 family. As to quaternary structure, part of the 50S ribosomal subunit. Forms a cluster with proteins L3 and L19. In the 70S ribosome, L14 and L19 interact and together make contacts with the 16S rRNA in bridges B5 and B8.

Binds to 23S rRNA. Forms part of two intersubunit bridges in the 70S ribosome. The polypeptide is Large ribosomal subunit protein uL14 (Stutzerimonas stutzeri (strain A1501) (Pseudomonas stutzeri)).